Reading from the N-terminus, the 185-residue chain is NAD(P)H-dependent FMN reductase PA1204 (185 aa).

FMN contacts are provided by residues 13 to 20 (SLRSGSYN) and 81 to 83 (YNY). 115 to 122 (SAGRFGTA) is an NAD(+) binding site.

The protein belongs to the SsuE family. In terms of assembly, homodimer. It depends on FMN as a cofactor.

Its function is as follows. Has NAD(P)H-dependent FMN reductase activity. This is NAD(P)H-dependent FMN reductase PA1204 from Pseudomonas aeruginosa (strain ATCC 15692 / DSM 22644 / CIP 104116 / JCM 14847 / LMG 12228 / 1C / PRS 101 / PAO1).